Reading from the N-terminus, the 248-residue chain is Ureidoacrylate amidohydrolase RutB (248 aa).

The Proton acceptor role is filled by aspartate 41. Lysine 150 is an active-site residue. Cysteine 183 (nucleophile) is an active-site residue.

Belongs to the isochorismatase family. RutB subfamily.

It carries out the reaction (Z)-3-ureidoacrylate + H2O + H(+) = (Z)-3-aminoacrylate + NH4(+) + CO2. The catalysed reaction is (Z)-3-ureidoacrylate + H2O = (Z)-3-aminoacrylate + carbamate + H(+). It catalyses the reaction (Z)-2-methylureidoacrylate + H2O + H(+) = (Z)-2-methylaminoacrylate + NH4(+) + CO2. Its function is as follows. Hydrolyzes ureidoacrylate to form aminoacrylate and carbamate. The carbamate hydrolyzes spontaneously, thereby releasing one of the nitrogen atoms of the pyrimidine ring as ammonia and one of its carbon atoms as CO2. This chain is Ureidoacrylate amidohydrolase RutB, found in Methylorubrum extorquens (strain CM4 / NCIMB 13688) (Methylobacterium extorquens).